The primary structure comprises 416 residues: Enolase (416 aa).

Residue Gln160 coordinates (2R)-2-phosphoglycerate. Glu204 acts as the Proton donor in catalysis. Asp239, Glu282, and Asp308 together coordinate Mg(2+). Residues Lys333, Arg362, Ser363, and Lys384 each contribute to the (2R)-2-phosphoglycerate site. Lys333 serves as the catalytic Proton acceptor.

This sequence belongs to the enolase family. It depends on Mg(2+) as a cofactor.

Its subcellular location is the cytoplasm. The protein resides in the secreted. It localises to the cell surface. The enzyme catalyses (2R)-2-phosphoglycerate = phosphoenolpyruvate + H2O. It participates in carbohydrate degradation; glycolysis; pyruvate from D-glyceraldehyde 3-phosphate: step 4/5. Functionally, catalyzes the reversible conversion of 2-phosphoglycerate (2-PG) into phosphoenolpyruvate (PEP). It is essential for the degradation of carbohydrates via glycolysis. This is Enolase from Metallosphaera sedula (strain ATCC 51363 / DSM 5348 / JCM 9185 / NBRC 15509 / TH2).